Consider the following 357-residue polypeptide: Alanine racemase (357 aa).

Catalysis depends on Lys-35, which acts as the Proton acceptor; specific for D-alanine. Residue Lys-35 is modified to N6-(pyridoxal phosphate)lysine. Arg-131 contacts substrate. The active-site Proton acceptor; specific for L-alanine is the Tyr-256. Met-304 serves as a coordination point for substrate.

It belongs to the alanine racemase family. Pyridoxal 5'-phosphate is required as a cofactor.

It catalyses the reaction L-alanine = D-alanine. Its pathway is amino-acid biosynthesis; D-alanine biosynthesis; D-alanine from L-alanine: step 1/1. Its function is as follows. Catalyzes the interconversion of L-alanine and D-alanine. May also act on other amino acids. The sequence is that of Alanine racemase (alr) from Legionella pneumophila (strain Lens).